Consider the following 247-residue polypeptide: Ubiquinone biosynthesis O-methyltransferase (247 aa).

Residues Arg-39, Gly-70, Asp-91, and Met-134 each coordinate S-adenosyl-L-methionine.

It belongs to the methyltransferase superfamily. UbiG/COQ3 family.

It catalyses the reaction a 3-demethylubiquinol + S-adenosyl-L-methionine = a ubiquinol + S-adenosyl-L-homocysteine + H(+). It carries out the reaction a 3-(all-trans-polyprenyl)benzene-1,2-diol + S-adenosyl-L-methionine = a 2-methoxy-6-(all-trans-polyprenyl)phenol + S-adenosyl-L-homocysteine + H(+). It functions in the pathway cofactor biosynthesis; ubiquinone biosynthesis. In terms of biological role, O-methyltransferase that catalyzes the 2 O-methylation steps in the ubiquinone biosynthetic pathway. The sequence is that of Ubiquinone biosynthesis O-methyltransferase from Cereibacter sphaeroides (strain ATCC 17029 / ATH 2.4.9) (Rhodobacter sphaeroides).